The sequence spans 593 residues: Sodium-independent sulfate anion transporter (593 aa).

Topologically, residues 1–34 (MAPDTCCCSATALRRRLPVLAWVPDYSLQWLRLD) are extracellular. Residues 35 to 55 (FIAGLSVGLTVIPQALAYAEV) traverse the membrane as a helical segment. Position 56 (A56) is a topological domain, cytoplasmic. A helical membrane pass occupies residues 57 to 77 (GLPPQYGLYSAFMGCFVYFFL). The Extracellular segment spans residues 78–82 (GTSRD). A helical transmembrane segment spans residues 83–100 (VTLGPTAIMSLLVSFYTF). Residues 101–106 (REPAYA) are Cytoplasmic-facing. The helical transmembrane segment at 107–127 (VLLAFLSGCIQLAMGLLHLGF) threads the bilayer. Residues 128 to 176 (LLDFISCPVIKGFTSAASITIGFGQIKNLLGLQKIPRQFFLQVYHTFLH) lie on the Extracellular side of the membrane. Residues 177 to 197 (IGETRVGDAVLGLASMLLLLV) form a helical membrane-spanning segment. Residues 198-233 (LKCMREHMPPPHPEMPLAVKFSRGLVWTVTTARNAL) are Cytoplasmic-facing. A helical transmembrane segment spans residues 234–254 (VVSSAALIAYAFEVTGSHPFV). The Extracellular portion of the chain corresponds to 255–287 (LTGKIAEGLPPVRIPPFSVTRDNKTISFSEMVQ). The chain crosses the membrane as a helical span at residues 288 to 308 (DMGAGLAVVPLMGLLESIAVA). Topologically, residues 309-324 (KSFASQNNYRIDANQE) are cytoplasmic. The chain crosses the membrane as a helical span at residues 325–345 (LLAIGLTNVLGSLVSSYPVTG). Topologically, residues 346–361 (SFGRTAVNAQTGVCTP) are extracellular. The chain crosses the membrane as a helical span at residues 362-382 (AGGLVTGALVLLSLNYLTSLF). A topological domain (cytoplasmic) is located at residue S383. Residues 384–404 (YIPKSALAAVIITAVTPLFDV) traverse the membrane as a helical segment. Topologically, residues 405–417 (KIFRSLWRVQRLD) are extracellular. The chain crosses the membrane as a helical span at residues 418 to 438 (LLPLCVTFLLSFWEIQYGILA). At 439 to 593 (GSLVSLLILL…SSLLKSPSGP (155 aa)) the chain is on the cytoplasmic side. Residues 453–566 (RPKTQVSEGQ…EEAEKFLQQE (114 aa)) enclose the STAS domain. The segment at 564–593 (QQEPGTEPNSIHEDAVPEQRSSLLKSPSGP) is disordered. Polar residues predominate over residues 582–593 (QRSSLLKSPSGP).

It belongs to the SLC26A/SulP transporter (TC 2.A.53) family. In terms of tissue distribution, abundantly expressed in the cerebellum, with a predominant expression in Purkinje cells (at protein level). Predominantly expressed in the kidney and brain. In the kidney localizes in collecting duct intercalated cells (at protein level). As to expression, predominantly expressed in the brain with lower levels in the kidney.

It is found in the cell membrane. Its subcellular location is the lysosome membrane. The protein localises to the apical cell membrane. The protein resides in the basolateral cell membrane. It carries out the reaction hydrogencarbonate(in) + chloride(out) = hydrogencarbonate(out) + chloride(in). The catalysed reaction is sulfate(in) + H(+)(in) = sulfate(out) + H(+)(out). The enzyme catalyses oxalate(in) + chloride(out) = oxalate(out) + chloride(in). In terms of biological role, sodium-independent anion exchanger mediating bicarbonate, chloride, sulfate and oxalate transport. Exhibits sodium-independent sulfate anion transporter activity that may cooperate with SLC26A2 to mediate DIDS-sensitive sulfate uptake into high endothelial venules endothelial cells (HEVEC). In the kidney, mediates chloride-bicarbonate exchange, facilitating V-ATPase-mediated acid secretion. May function as a chloride channel, playing an important role in moderating chloride homeostasis and neuronal activity in the cerebellum. This is Sodium-independent sulfate anion transporter from Mus musculus (Mouse).